The chain runs to 76 residues: cAMP-dependent protein kinase inhibitor alpha (76 aa).

Residue Thr-2 is modified to N-acetylthreonine. Residues 49 to 76 (KTEGEEDAQRNSTEQSGEAQGEAAKSES) form a disordered region.

The protein belongs to the PKI family.

Its function is as follows. Extremely potent competitive inhibitor of cAMP-dependent protein kinase activity, this protein interacts with the catalytic subunit of the enzyme after the cAMP-induced dissociation of its regulatory chains. The sequence is that of cAMP-dependent protein kinase inhibitor alpha (PKIA) from Bos taurus (Bovine).